The sequence spans 79 residues: MKVAIIFLLSALALLSLAGNPPAEVNGKTPNCPKQIMGCPRIYDPVCGTNGITYPSECSLCFENRKFGTSIHIQRRGTC.

An N-terminal signal peptide occupies residues 1–18 (MKVAIIFLLSALALLSLA). The 54-residue stretch at 26–79 (NGKTPNCPKQIMGCPRIYDPVCGTNGITYPSECSLCFENRKFGTSIHIQRRGTC) folds into the Kazal-like domain. 3 disulfides stabilise this stretch: cysteine 32-cysteine 61, cysteine 39-cysteine 58, and cysteine 47-cysteine 79.

It is found in the secreted. Functionally, serine protease inhibitor which exhibits anti-trypsin activity. In the pancreas, protects against trypsin-catalyzed premature activation of zymogens. In terms of biological role, in the male reproductive tract, binds to sperm heads where it modulates sperm capacitance by inhibiting calcium uptake and nitrogen oxide (NO) production. In Rattus norvegicus (Rat), this protein is Serine protease inhibitor Kazal-type 1.